The sequence spans 415 residues: MMYEVKEFSSGKRKLEDYKSIIGEEEVSKIQEKAEKLKGRSFVHVNSTSFGGGVAEILHSLVPLLRSIGIEARWFVIEGPTEFFNVTKTFHNALQGNESLKLTEEMKELYLNVNRENSKFIDLSSFDYVLVHDPQPAALIEFYEKKSPWLWRCHIDLSSPNREFWEFLRRFVEKYDRYIFHLPEYVQPELDRNKAVIMPPSIDPLSEKNVELKQTEILRILERFDVDPEKPIITQVSRFDPWKGIFDVIEIYRKVKEKIPGVQLLLVGVMAHDDPEGWIYFEKTLRKIGEDYDVKVLTNLIGVHAREVNAFQRASDVILQMSIREGFGLTVTEAMWKGKPVIGRAVGGIKFQIVDGETGFLVRDANEAVEKVLYLLKHPEVSKEMGAKAKERVRKNFIITKHMERYLDILNSLGG.

It belongs to the glycosyltransferase group 1 family. Glycosyltransferase 4 subfamily. As to quaternary structure, homodimer. Mg(2+) serves as cofactor.

It catalyses the reaction an NDP-alpha-D-glucose + D-glucose = alpha,alpha-trehalose + a ribonucleoside 5'-diphosphate + H(+). Synthesizes trehalose from ADP-, UDP- or GDP-glucose and glucose. In Pyrococcus horikoshii (strain ATCC 700860 / DSM 12428 / JCM 9974 / NBRC 100139 / OT-3), this protein is Trehalose synthase.